The sequence spans 630 residues: Scarecrow-like protein 34 (630 aa).

Residues 240–628 form the GRAS domain; the sequence is KKKKSQVVDF…RTLYASSCWV (389 aa). The tract at residues 247–312 is leucine repeat I (LRI); sequence VDFRTLLTHC…GSTGPMIQTY (66 aa). The interval 331-396 is VHIID; that stretch reads YRVYLSSSPF…DVPRKLRITG (66 aa). Positions 362–366 match the VHIID motif; sequence LHIVD. Residues 412-444 are leucine repeat II (LRII); it reads ETGRRLAEYCKRFNVPFEYKAIASQNWETIRIE. The tract at residues 454–549 is PFYRE; sequence LAVNAGLRLK…REFYGREAMN (96 aa). Positions 552-628 are SAW; it reads ACEEADRVER…RTLYASSCWV (77 aa).

Belongs to the GRAS family.

Its subcellular location is the nucleus. Functionally, probable transcription factor involved in plant development. The protein is Scarecrow-like protein 34 (SCL34) of Arabidopsis thaliana (Mouse-ear cress).